A 350-amino-acid polypeptide reads, in one-letter code: Divinyl chlorophyll a/b light-harvesting protein PcbB (350 aa).

6 helical membrane passes run 27 to 47, 89 to 109, 141 to 161, 202 to 222, 244 to 264, and 305 to 325; these read FLAAHIAHTGLMAFWAGSFTL, IVVTAVLHLVLSMVYAAGGLM, FILGHHLFLLGLGNVQFVEWA, VMGGHAFLALFMMSGGLWHIV, LSWALAGVGWMALVAAFWCAS, and LTNIHYYLGFFYIQGHLWHAL.

It belongs to the PsbB/PsbC family. IsiA/Pcb subfamily. In terms of assembly, the antenna complex consists of divinyl chlorophylls (a and b) and divinyl chlorophyll a/b binding proteins. Under iron-starvation forms a complex with PSI, consisting of a PSI trimer surrounded by a ring composed of 18 PcbB subunits. Divinyl chlorophyll a serves as cofactor. Divinyl chlorophyll b is required as a cofactor.

It localises to the cellular thylakoid membrane. Functionally, the antenna complex functions as a light receptor, it captures and delivers excitation energy to photosystems I. The Prochlorales pcb genes are not related to higher plant LHCs. This chain is Divinyl chlorophyll a/b light-harvesting protein PcbB (pcbB), found in Prochlorococcus marinus (strain MIT 9313).